A 470-amino-acid polypeptide reads, in one-letter code: Neuraminidase (470 aa).

Over 1–6 (MNPNQK) the chain is Intravirion. A helical transmembrane segment spans residues 7-27 (IITIGSISIAIGIISLMLQIG). An involved in apical transport and lipid raft association region spans residues 11–33 (GSISIAIGIISLMLQIGNIISIW). Topologically, residues 28-470 (NIISIWASHS…GAELPFTIDK (443 aa)) are virion surface. The segment at 36-90 (HSIQTGSQNHTGICNQRIITYENSTWVNHTYVNINNTNVVAGKDKTSVTLAGNSS) is hypervariable stalk region. Asn-44, Asn-58, Asn-63, Asn-70, and Asn-88 each carry an N-linked (GlcNAc...) asparagine; by host glycan. The segment at 91-470 (LCSISGWAIY…GAELPFTIDK (380 aa)) is head of neuraminidase. 8 disulfide bridges follow: Cys-92–Cys-417, Cys-124–Cys-129, Cys-184–Cys-231, Cys-233–Cys-238, Cys-279–Cys-292, Cys-281–Cys-290, Cys-318–Cys-335, and Cys-421–Cys-447. Residue Arg-118 coordinates substrate. An N-linked (GlcNAc...) asparagine; by host glycan is attached at Asn-146. The active-site Proton donor/acceptor is the Asp-151. Arg-152 contributes to the substrate binding site. Asn-235 carries an N-linked (GlcNAc...) asparagine; by host glycan. A substrate-binding site is contributed by 277–278 (EE). Arg-293 lines the substrate pocket. The Ca(2+) site is built by Asp-294, Gly-298, and Asp-324. Arg-368 provides a ligand contact to substrate. Residue Tyr-402 is the Nucleophile of the active site. N-linked (GlcNAc...) asparagine; by host glycans are attached at residues Asn-434 and Asn-455.

This sequence belongs to the glycosyl hydrolase 34 family. As to quaternary structure, homotetramer. Ca(2+) serves as cofactor. In terms of processing, N-glycosylated.

It localises to the virion membrane. Its subcellular location is the host apical cell membrane. It catalyses the reaction Hydrolysis of alpha-(2-&gt;3)-, alpha-(2-&gt;6)-, alpha-(2-&gt;8)- glycosidic linkages of terminal sialic acid residues in oligosaccharides, glycoproteins, glycolipids, colominic acid and synthetic substrates.. Inhibited by the neuraminidase inhibitors zanamivir (Relenza) and oseltamivir (Tamiflu). These drugs interfere with the release of progeny virus from infected cells and are effective against all influenza strains. Resistance to neuraminidase inhibitors is quite rare. Functionally, catalyzes the removal of terminal sialic acid residues from viral and cellular glycoconjugates. Cleaves off the terminal sialic acids on the glycosylated HA during virus budding to facilitate virus release. Additionally helps virus spread through the circulation by further removing sialic acids from the cell surface. These cleavages prevent self-aggregation and ensure the efficient spread of the progeny virus from cell to cell. Otherwise, infection would be limited to one round of replication. Described as a receptor-destroying enzyme because it cleaves a terminal sialic acid from the cellular receptors. May facilitate viral invasion of the upper airways by cleaving the sialic acid moieties on the mucin of the airway epithelial cells. Likely to plays a role in the budding process through its association with lipid rafts during intracellular transport. May additionally display a raft-association independent effect on budding. Plays a role in the determination of host range restriction on replication and virulence. Sialidase activity in late endosome/lysosome traffic seems to enhance virus replication. The sequence is that of Neuraminidase from Aves (Human).